The sequence spans 235 residues: Phosphoribosylaminoimidazole-succinocarboxamide synthase (235 aa).

This sequence belongs to the SAICAR synthetase family.

The enzyme catalyses 5-amino-1-(5-phospho-D-ribosyl)imidazole-4-carboxylate + L-aspartate + ATP = (2S)-2-[5-amino-1-(5-phospho-beta-D-ribosyl)imidazole-4-carboxamido]succinate + ADP + phosphate + 2 H(+). It functions in the pathway purine metabolism; IMP biosynthesis via de novo pathway; 5-amino-1-(5-phospho-D-ribosyl)imidazole-4-carboxamide from 5-amino-1-(5-phospho-D-ribosyl)imidazole-4-carboxylate: step 1/2. This Sulfolobus acidocaldarius (strain ATCC 33909 / DSM 639 / JCM 8929 / NBRC 15157 / NCIMB 11770) protein is Phosphoribosylaminoimidazole-succinocarboxamide synthase.